Reading from the N-terminus, the 672-residue chain is tRNA 5-methylaminomethyl-2-thiouridine biosynthesis bifunctional protein MnmC (672 aa).

The interval 1–243 (MTSITHAELG…KREMIAGCME (243 aa)) is tRNA (mnm(5)s(2)U34)-methyltransferase. The segment at 269–672 (IGGGIASAAL…LRKGKAITEL (404 aa)) is FAD-dependent cmnm(5)s(2)U34 oxidoreductase.

In the N-terminal section; belongs to the methyltransferase superfamily. tRNA (mnm(5)s(2)U34)-methyltransferase family. The protein in the C-terminal section; belongs to the DAO family. FAD is required as a cofactor.

It localises to the cytoplasm. The catalysed reaction is 5-aminomethyl-2-thiouridine(34) in tRNA + S-adenosyl-L-methionine = 5-methylaminomethyl-2-thiouridine(34) in tRNA + S-adenosyl-L-homocysteine + H(+). In terms of biological role, catalyzes the last two steps in the biosynthesis of 5-methylaminomethyl-2-thiouridine (mnm(5)s(2)U) at the wobble position (U34) in tRNA. Catalyzes the FAD-dependent demodification of cmnm(5)s(2)U34 to nm(5)s(2)U34, followed by the transfer of a methyl group from S-adenosyl-L-methionine to nm(5)s(2)U34, to form mnm(5)s(2)U34. The sequence is that of tRNA 5-methylaminomethyl-2-thiouridine biosynthesis bifunctional protein MnmC from Vibrio vulnificus (strain YJ016).